A 678-amino-acid chain; its full sequence is DNA ligase (678 aa).

NAD(+) contacts are provided by residues Asp47–Asp51, Ser96–Leu97, and Glu122. Lys124 functions as the N6-AMP-lysine intermediate in the catalytic mechanism. NAD(+) contacts are provided by Arg145, Glu182, Lys300, and Lys324. Zn(2+)-binding residues include Cys418, Cys421, Cys436, and Cys442. The BRCT domain maps to Ala602–Leu678.

Belongs to the NAD-dependent DNA ligase family. LigA subfamily. It depends on Mg(2+) as a cofactor. Mn(2+) is required as a cofactor.

It carries out the reaction NAD(+) + (deoxyribonucleotide)n-3'-hydroxyl + 5'-phospho-(deoxyribonucleotide)m = (deoxyribonucleotide)n+m + AMP + beta-nicotinamide D-nucleotide.. DNA ligase that catalyzes the formation of phosphodiester linkages between 5'-phosphoryl and 3'-hydroxyl groups in double-stranded DNA using NAD as a coenzyme and as the energy source for the reaction. It is essential for DNA replication and repair of damaged DNA. In Francisella tularensis subsp. holarctica (strain FTNF002-00 / FTA), this protein is DNA ligase.